Consider the following 864-residue polypeptide: DNA mismatch repair protein MutS (864 aa).

607 to 614 (GPNMGGKS) is an ATP binding site.

This sequence belongs to the DNA mismatch repair MutS family.

Functionally, this protein is involved in the repair of mismatches in DNA. It is possible that it carries out the mismatch recognition step. This protein has a weak ATPase activity. This Neisseria meningitidis serogroup B (strain ATCC BAA-335 / MC58) protein is DNA mismatch repair protein MutS.